The primary structure comprises 56 residues: Large ribosomal subunit protein bL32 (56 aa).

The interval 1–36 (MAVQQNKKSRSKRGMRRSHDALSTAQLSVDATSGEV) is disordered. Residues 7 to 16 (KKSRSKRGMR) show a composition bias toward basic residues. The segment covering 21 to 31 (ALSTAQLSVDA) has biased composition (polar residues).

Belongs to the bacterial ribosomal protein bL32 family.

The sequence is that of Large ribosomal subunit protein bL32 from Shewanella oneidensis (strain ATCC 700550 / JCM 31522 / CIP 106686 / LMG 19005 / NCIMB 14063 / MR-1).